The primary structure comprises 69 residues: MMMMTKMFVQIAVVCLLATMAVVSAHEGHHHHAPAPAPGPASSSTVVSATNMFTVLAIAAVALVVGSNH.

The N-terminal stretch at 1–25 (MMMMTKMFVQIAVVCLLATMAVVSA) is a signal peptide. P34, P36, P38, and P40 each carry 4-hydroxyproline. P34, P36, P38, and P40 each carry an O-linked (Ara...) hydroxyproline glycan. S42 carries GPI-anchor amidated serine lipidation. The propeptide at 43-69 (SSTVVSATNMFTVLAIAAVALVVGSNH) is removed in mature form.

Belongs to the AG-peptide AGP family. In terms of processing, contains 4-hydroxyproline; hydroxylated on Pro-34, Pro-36, Pro-38 and Pro-40. Post-translationally, O-glycosylated on hydroxyprolines; noncontiguous hydroxylproline residues are glycosylated with arabinogalactan.

Its subcellular location is the cell membrane. Functionally, proteoglycan that seems to be implicated in diverse developmental roles such as differentiation, cell-cell recognition, embryogenesis and programmed cell death. The chain is Arabinogalactan protein 24 from Arabidopsis thaliana (Mouse-ear cress).